A 209-amino-acid chain; its full sequence is FMN-dependent NADH:quinone oxidoreductase (209 aa).

FMN-binding positions include Ser18, 102–105 (MYNF), and 146–149 (SRGG).

The protein belongs to the azoreductase type 1 family. In terms of assembly, homodimer. Requires FMN as cofactor.

It carries out the reaction 2 a quinone + NADH + H(+) = 2 a 1,4-benzosemiquinone + NAD(+). The enzyme catalyses N,N-dimethyl-1,4-phenylenediamine + anthranilate + 2 NAD(+) = 2-(4-dimethylaminophenyl)diazenylbenzoate + 2 NADH + 2 H(+). Functionally, quinone reductase that provides resistance to thiol-specific stress caused by electrophilic quinones. Also exhibits azoreductase activity. Catalyzes the reductive cleavage of the azo bond in aromatic azo compounds to the corresponding amines. This Saccharophagus degradans (strain 2-40 / ATCC 43961 / DSM 17024) protein is FMN-dependent NADH:quinone oxidoreductase.